A 213-amino-acid chain; its full sequence is Adenylate kinase (213 aa).

10–15 (GSGKGS) serves as a coordination point for ATP. Residues 30–60 (STGNLFRAILKEDSELARKIKEINVSGGKLV) are NMP. Residues Thr-31, Arg-36, 58–60 (KLV), 87–90 (GYPR), and Gln-94 contribute to the AMP site. Positions 123–160 (GRWMCPKCAGIYNIHFKKPQVHGLCDNDQATLYQRADD) are LID. Position 124 (Arg-124) interacts with ATP. Zn(2+) contacts are provided by Cys-127 and Cys-130. ATP is bound at residue 133 to 134 (IY). Cys-147 and Asp-150 together coordinate Zn(2+). 2 residues coordinate AMP: Arg-157 and Arg-168. Gln-196 contacts ATP.

This sequence belongs to the adenylate kinase family. In terms of assembly, monomer.

It is found in the cytoplasm. It catalyses the reaction AMP + ATP = 2 ADP. It participates in purine metabolism; AMP biosynthesis via salvage pathway; AMP from ADP: step 1/1. Functionally, catalyzes the reversible transfer of the terminal phosphate group between ATP and AMP. Plays an important role in cellular energy homeostasis and in adenine nucleotide metabolism. The sequence is that of Adenylate kinase from Ureaplasma parvum serovar 3 (strain ATCC 27815 / 27 / NCTC 11736).